Here is a 152-residue protein sequence, read N- to C-terminus: Ninjurin-1 (152 aa).

The residue at position 1 (Met1) is an N-acetylmethionine. A compositionally biased stretch (acidic residues) spans 1–10 (MDPGTEEYEL). Positions 1–30 (MDPGTEEYELNGDLRPGSPGSPDASPPRWG) are disordered. The Extracellular portion of the chain corresponds to 1–78 (MDPGTEEYEL…EQGNEFAFFV (78 aa)). Over residues 16–27 (PGSPGSPDASPP) the composition is skewed to low complexity. Phosphoserine is present on residues Ser18, Ser21, and Ser25. The segment at 26–37 (PPRWGLRNRPIN) is N-terminal adhesion motif. A required to induce plasma membrane rupture region spans residues 40–69 (HYANKKSAAESMLDIALLMANASQLKAVVE). The tract at residues 44 to 55 (KKSAAESMLDIA) is helix alpha1. The tract at residues 58-74 (MANASQLKAVVEQGNEF) is helix alpha2. Asn60 carries an N-linked (GlcNAc...) asparagine glycan. A helical membrane pass occupies residues 79–103 (PLVVLISISLVLQIGVGVLLIFLVK). Over 104–113 (YDLNNPAKHA) the chain is Cytoplasmic. The chain crosses the membrane as a helical span at residues 114–138 (KLDFLNNLATGLVFIIVVVNIFITA). The Extracellular portion of the chain corresponds to 139–152 (FGVQKPVMDVAPRQ).

It belongs to the ninjurin family. Homodimer; in absence of death stimuli, forms an inactive homodimer. Homooligomer; in response to death stimuli, homooligomerizes into long, highly branched filaments and large, ring-shaped structures in the membrane. The topology shown in the entry corresponds to the activated form. In terms of processing, cleaved by MMP9 protease to generate the Secreted ninjurin-1 form. N-linked glycosylation is required for homooligomerization.

The protein resides in the cell membrane. It is found in the synaptic cell membrane. It localises to the secreted. In response to death stimuli, homooligomerizes and disrupts membrane integrity by introducing the hydrophilic faces of alpha1 and alpha2 helices into the hydrophobic membrane. Homooligomerization and ability to mediate plasma membrane rupture is inhibited by glycine; it is unclear whether glycine directly or indirectly inhibits homooligomerization. In normal conditions, NINJ1 is autoinhibited via formation of a homodimer: in the inactive homodimer, the alpha1 and alpha2 helices (residues 44-74) form a single transmembrane region without a kink, in which hydrophilic faces of alpha1 and alpha2 helices are sequestered. Its function is as follows. Effector of various programmed cell death, such as pyroptosis and necroptosis, which mediates plasma membrane rupture (cytolysis). Oligomerizes in response to death stimuli and forms ring-like structures on the plasma membrane: acts by cutting and shedding membrane disks, like a cookie cutter, leading to membrane damage and loss that cannot be repaired by the cell. Plasma membrane rupture leads to release intracellular molecules named damage-associated molecular patterns (DAMPs) that propagate the inflammatory response. Mechanistically, mediates plasma membrane rupture by introducing hydrophilic faces of 2 alpha helices into the hydrophobic membrane. Induces plasma membrane rupture downstream of Gasdermin (GSDMA, GSDMB, GSDMC, GSDMD, or GSDME) or MLKL during pyroptosis or necroptosis, respectively. Acts as an effector of PANoptosis downstream of CASP1, CASP4, CASP8 and RIPK3. Also induces plasma membrane rupture in response to cell swelling caused by osmotic stress and ferroptosis downstream of lipid peroxidation. Acts as a regulator of Toll-like receptor 4 (TLR4) signaling triggered by lipopolysaccharide (LPS) during systemic inflammation; directly binds LPS. Involved in leukocyte migration during inflammation by promoting transendothelial migration of macrophages via homotypic binding. Promotes the migration of monocytes across the brain endothelium to central nervous system inflammatory lesions. Also acts as a homophilic transmembrane adhesion molecule involved in various processes such as axonal growth, cell chemotaxis and angiogenesis. Promotes cell adhesion by mediating homophilic interactions via its extracellular N-terminal adhesion motif (N-NAM). Involved in the progression of the inflammatory stress by promoting cell-to-cell interactions between immune cells and endothelial cells. Plays a role in nerve regeneration by promoting maturation of Schwann cells. Acts as a regulator of angiogenesis. Promotes the formation of new vessels by mediating the interaction between capillary pericyte cells and endothelial cells. Promotes osteoclasts development by enhancing the survival of prefusion osteoclasts. Also involved in striated muscle growth and differentiation. Secreted form generated by cleavage, which has chemotactic activity. Acts as an anti-inflammatory mediator by promoting monocyte recruitment, thereby ameliorating atherosclerosis. This Rattus norvegicus (Rat) protein is Ninjurin-1.